The chain runs to 436 residues: 3-ketoacyl-CoA thiolase (436 aa).

The active-site Acyl-thioester intermediate is the C99. Catalysis depends on proton acceptor residues H392 and C422.

Belongs to the thiolase-like superfamily. Thiolase family. In terms of assembly, heterotetramer of two alpha chains (FadJ) and two beta chains (FadI).

It is found in the cytoplasm. The catalysed reaction is an acyl-CoA + acetyl-CoA = a 3-oxoacyl-CoA + CoA. Its pathway is lipid metabolism; fatty acid beta-oxidation. Functionally, catalyzes the final step of fatty acid oxidation in which acetyl-CoA is released and the CoA ester of a fatty acid two carbons shorter is formed. This is 3-ketoacyl-CoA thiolase from Shewanella pealeana (strain ATCC 700345 / ANG-SQ1).